The primary structure comprises 467 residues: Neutrophil collagenase (467 aa).

The first 20 residues, 1–20, serve as a signal peptide directing secretion; sequence MFSLKTLPFLLLLHVQISKA. A propeptide spans 21 to 100 (activation peptide); the sequence is FPVSSKEKNT…CGVPDSGGFM (80 aa). N54 and N73 each carry an N-linked (GlcNAc...) asparagine glycan. The short motif at 89–96 is the Cysteine switch element; the sequence is PRCGVPDS. Residue C91 coordinates Zn(2+). An N-linked (GlcNAc...) asparagine glycan is attached at N112. D157 serves as a coordination point for Ca(2+). Positions 167 and 169 each coordinate Zn(2+). The Ca(2+) site is built by D174, G175, N177, and I179. Position 182 (H182) interacts with Zn(2+). Ca(2+)-binding residues include G189, G191, and D193. H195 lines the Zn(2+) pocket. Ca(2+)-binding residues include D197 and E200. N204 is a glycosylation site (N-linked (GlcNAc...) asparagine). H217 lines the Zn(2+) pocket. Residue E218 is part of the active site. Residues H221 and H227 each coordinate Zn(2+). The N-linked (GlcNAc...) asparagine glycan is linked to N246. Hemopexin repeat units lie at residues 276–325, 326–372, 374–420, and 421–464; these read PKPC…WPSL, PTGI…GFPS, VQAI…FPGI, and ESKV…WLNC. Cysteines 279 and 464 form a disulfide. D286 serves as a coordination point for Ca(2+). Residues D378 and D425 each coordinate Ca(2+).

It belongs to the peptidase M10A family. Requires Ca(2+) as cofactor. The cofactor is Zn(2+). As to expression, neutrophils.

It is found in the cytoplasmic granule. The protein localises to the secreted. The protein resides in the extracellular space. Its subcellular location is the extracellular matrix. The catalysed reaction is Cleavage of interstitial collagens in the triple helical domain. Unlike EC 3.4.24.7, this enzyme cleaves type III collagen more slowly than type I.. Cannot be activated without removal of the activation peptide. Functionally, can degrade fibrillar type I, II, and III collagens. The sequence is that of Neutrophil collagenase (MMP8) from Homo sapiens (Human).